Reading from the N-terminus, the 481-residue chain is UDP-N-acetylmuramoylalanine--D-glutamate ligase (481 aa).

Residue 108–114 (GTNGKTS) coordinates ATP.

Belongs to the MurCDEF family.

It localises to the cytoplasm. The catalysed reaction is UDP-N-acetyl-alpha-D-muramoyl-L-alanine + D-glutamate + ATP = UDP-N-acetyl-alpha-D-muramoyl-L-alanyl-D-glutamate + ADP + phosphate + H(+). It participates in cell wall biogenesis; peptidoglycan biosynthesis. Functionally, cell wall formation. Catalyzes the addition of glutamate to the nucleotide precursor UDP-N-acetylmuramoyl-L-alanine (UMA). The protein is UDP-N-acetylmuramoylalanine--D-glutamate ligase of Bifidobacterium longum (strain DJO10A).